Consider the following 219-residue polypeptide: Claudin-6 (219 aa).

Over 1-7 (MASTGLQ) the chain is Cytoplasmic. Residues 8–28 (ILGIVLTLLGWVNALVSCALP) form a helical membrane-spanning segment. Over 29–81 (MWKVTAFIGNSIVVAQMVWEGLWMSCVVQSTGQMQCKVYDSLLALPQDLQAAR) the chain is Extracellular. A helical membrane pass occupies residues 82–102 (ALCVVTLLIVLLGLLVYLAGA). Residues 103-116 (KCTTCVEDRNSKSR) lie on the Cytoplasmic side of the membrane. A helical transmembrane segment spans residues 117-137 (LVLISGIIFVISGVLTLIPVC). Topologically, residues 138-163 (WTAHSIIQDFYNPLVADAQKRELGAS) are extracellular. Residues 164-184 (LYLGWAASGLLLLGGGLLCCA) form a helical membrane-spanning segment. The Cytoplasmic segment spans residues 185–219 (CSSGGTQGPRHYMACYSTSVPHSRGPSEYPTKNYV). 4 positions are modified to phosphoserine: Ser201, Ser203, Ser207, and Ser211. The interval 218-219 (YV) is interactions with TJP1, TJP2 and TJP3.

Belongs to the claudin family. As to quaternary structure, directly interacts with TJP1/ZO-1, TJP2/ZO-2 and TJP3/ZO-3. Interacts with CLDN1, CD81 and OCLN. As to expression, expressed mostly in embryonic tissues.

It is found in the cell junction. The protein localises to the tight junction. It localises to the cell membrane. Plays a major role in tight junction-specific obliteration of the intercellular space, through calcium-independent cell-adhesion activity. The chain is Claudin-6 (Cldn6) from Mus musculus (Mouse).